The following is a 363-amino-acid chain: Large ribosomal subunit protein uL4 (363 aa).

It belongs to the universal ribosomal protein uL4 family. As to quaternary structure, component of the large ribosomal subunit. Mature ribosomes consist of a small (40S) and a large (60S) subunit. The 40S subunit contains about 32 different proteins and 1 molecule of RNA (18S). The 60S subunit contains 45 different proteins and 3 molecules of RNA (25S, 5.8S and 5S).

Its subcellular location is the cytoplasm. Functionally, component of the ribosome, a large ribonucleoprotein complex responsible for the synthesis of proteins in the cell. The small ribosomal subunit (SSU) binds messenger RNAs (mRNAs) and translates the encoded message by selecting cognate aminoacyl-transfer RNA (tRNA) molecules. The large subunit (LSU) contains the ribosomal catalytic site termed the peptidyl transferase center (PTC), which catalyzes the formation of peptide bonds, thereby polymerizing the amino acids delivered by tRNAs into a polypeptide chain. The nascent polypeptides leave the ribosome through a tunnel in the LSU and interact with protein factors that function in enzymatic processing, targeting, and the membrane insertion of nascent chains at the exit of the ribosomal tunnel. The chain is Large ribosomal subunit protein uL4 from Candida albicans (strain SC5314 / ATCC MYA-2876) (Yeast).